We begin with the raw amino-acid sequence, 753 residues long: 5-methyltetrahydropteroyltriglutamate--homocysteine methyltransferase (753 aa).

5-methyltetrahydropteroyltri-L-glutamate is bound by residues 17-20 and K117; that span reads RELK. L-homocysteine contacts are provided by residues 431–433 and E484; that span reads IGS. Residues 431–433 and E484 each bind L-methionine; that span reads IGS. Residues 515-516 and W561 contribute to the 5-methyltetrahydropteroyltri-L-glutamate site; that span reads RC. D599 contributes to the L-homocysteine binding site. L-methionine is bound at residue D599. E605 provides a ligand contact to 5-methyltetrahydropteroyltri-L-glutamate. Positions 641, 643, and 665 each coordinate Zn(2+). H694 functions as the Proton donor in the catalytic mechanism. C726 contacts Zn(2+).

This sequence belongs to the vitamin-B12 independent methionine synthase family. Zn(2+) serves as cofactor.

The enzyme catalyses 5-methyltetrahydropteroyltri-L-glutamate + L-homocysteine = tetrahydropteroyltri-L-glutamate + L-methionine. It participates in amino-acid biosynthesis; L-methionine biosynthesis via de novo pathway; L-methionine from L-homocysteine (MetE route): step 1/1. In terms of biological role, catalyzes the transfer of a methyl group from 5-methyltetrahydrofolate to homocysteine resulting in methionine formation. This chain is 5-methyltetrahydropteroyltriglutamate--homocysteine methyltransferase, found in Shigella flexneri serotype 5b (strain 8401).